A 736-amino-acid chain; its full sequence is Subtilisin-like protease SBT4.11 (736 aa).

The signal sequence occupies residues 1 to 25 (MAKRGAFSSFHSFLIVLLFLNSVLA). Positions 26–113 (VTHGHQDKQV…VFPNKKLKLQ (88 aa)) are cleaved as a propeptide — activation peptide. The region spanning 35 to 112 (VYIVYMGSLP…SVFPNKKLKL (78 aa)) is the Inhibitor I9 domain. A Peptidase S8 domain is found at 117 to 579 (SWDFMGLKEG…AGHVDPIAAT (463 aa)). Catalysis depends on aspartate 145, which acts as the Charge relay system. Asparagine 176 carries an N-linked (GlcNAc...) asparagine glycan. Histidine 200 (charge relay system) is an active-site residue. N-linked (GlcNAc...) asparagine glycans are attached at residues asparagine 215 and asparagine 223. The PA domain maps to 355–437 (KFPLVYGKSA…GLQKDDFESV (83 aa)). Serine 518 serves as the catalytic Charge relay system. Asparagine 555, asparagine 602, asparagine 638, asparagine 646, and asparagine 656 each carry an N-linked (GlcNAc...) asparagine glycan.

The protein belongs to the peptidase S8 family. In terms of processing, the C-terminal propeptide is autocleaved.

It is found in the secreted. The protein is Subtilisin-like protease SBT4.11 of Arabidopsis thaliana (Mouse-ear cress).